Consider the following 1231-residue polypeptide: Cohesin subunit SA-2 (1231 aa).

M1 carries the N-acetylmethionine modification. The interval 1-75 (MIAAPEIPTD…GPNRMNGHHQ (75 aa)) is disordered. The span at 36–48 (KQGKGKTCKKGKK) shows a compositional bias: basic residues. Residues 293–378 (FVHRYRDAIA…SRFKDRIVSM (86 aa)) form the SCD domain. At K607 the chain carries N6-acetyllysine. 4 positions are modified to phosphoserine: S1058, S1061, S1064, and S1065. The interval 1064–1083 (SSRGSTVRSKKSKPSTGKRK) is disordered. Residues 1071–1082 (RSKKSKPSTGKR) show a composition bias toward basic residues. Residue T1112 is modified to Phosphothreonine. A phosphoserine mark is found at S1177 and S1178.

This sequence belongs to the SCC3 family. Interacts directly with RAD21 in cohesin complex. Cohesin complexes are composed of a heterodimer between a SMC1 protein (SMC1A or SMC1B) and SMC3, which are attached via their hinge domain, and RAD21 which link them at their heads, and one STAG protein (STAG1, STAG2 or STAG3). In cohesin complexes, STAG2 is mutually exclusive with STAG1 and STAG3. Phosphorylated by PLK1. The large dissociation of cohesin from chromosome arms during prophase is partly due to its phosphorylation.

Its subcellular location is the nucleus. It is found in the chromosome. The protein localises to the centromere. Functionally, component of cohesin complex, a complex required for the cohesion of sister chromatids after DNA replication. The cohesin complex apparently forms a large proteinaceous ring within which sister chromatids can be trapped. At anaphase, the complex is cleaved and dissociates from chromatin, allowing sister chromatids to segregate. The cohesin complex may also play a role in spindle pole assembly during mitosis. This is Cohesin subunit SA-2 (STAG2) from Homo sapiens (Human).